The chain runs to 204 residues: uncharacterized protein (204 aa).

An N-terminal signal peptide occupies residues 1 to 24; that stretch reads MPINTFCKISLFICALFCSTVTLA.

This is an uncharacterized protein from Pasteurella multocida (strain Pm70).